The following is a 215-amino-acid chain: uncharacterized protein (215 aa).

Belongs to the HAD-like hydrolase superfamily. CbbY/CbbZ/Gph/YieH family.

This is an uncharacterized protein from Lacticaseibacillus casei (Lactobacillus casei).